The sequence spans 97 residues: Large ribosomal subunit protein bL27 (97 aa).

The propeptide occupies 1 to 12 (MLKMNLANLQLF). The interval 14-37 (HKKGGGSTSNGRDSQAKRLGAKAA) is disordered.

This sequence belongs to the bacterial ribosomal protein bL27 family. In terms of processing, the N-terminus is cleaved by ribosomal processing cysteine protease Prp.

This chain is Large ribosomal subunit protein bL27, found in Streptococcus agalactiae serotype III (strain NEM316).